Reading from the N-terminus, the 110-residue chain is Large ribosomal subunit protein uL22 (110 aa).

The segment covering 85-95 (RGTASKIRKPT) has biased composition (basic residues). Residues 85-110 (RGTASKIRKPTSHVMVEVSKAQKKEA) are disordered.

The protein belongs to the universal ribosomal protein uL22 family. In terms of assembly, part of the 50S ribosomal subunit.

This protein binds specifically to 23S rRNA; its binding is stimulated by other ribosomal proteins, e.g. L4, L17, and L20. It is important during the early stages of 50S assembly. It makes multiple contacts with different domains of the 23S rRNA in the assembled 50S subunit and ribosome. Its function is as follows. The globular domain of the protein is located near the polypeptide exit tunnel on the outside of the subunit, while an extended beta-hairpin is found that lines the wall of the exit tunnel in the center of the 70S ribosome. This Campylobacter curvus (strain 525.92) protein is Large ribosomal subunit protein uL22.